Here is a 366-residue protein sequence, read N- to C-terminus: Chaperone protein DnaJ (366 aa).

The region spanning 5–69 (DYYEVLGVSK…QKRAQYDQFG (65 aa)) is the J domain. The CR-type zinc-finger motif lies at 128-210 (GKELNVEIPV…CHGTGKVRKR (83 aa)). Residues Cys141, Cys144, Cys158, Cys161, Cys184, Cys187, Cys198, and Cys201 each coordinate Zn(2+). 4 CXXCXGXG motif repeats span residues 141-148 (CDTCHGSG), 158-165 (CKYCSGTG), 184-191 (CRHCSGTG), and 198-205 (CTTCHGTG).

Belongs to the DnaJ family. As to quaternary structure, homodimer. Zn(2+) is required as a cofactor.

The protein localises to the cytoplasm. Participates actively in the response to hyperosmotic and heat shock by preventing the aggregation of stress-denatured proteins and by disaggregating proteins, also in an autonomous, DnaK-independent fashion. Unfolded proteins bind initially to DnaJ; upon interaction with the DnaJ-bound protein, DnaK hydrolyzes its bound ATP, resulting in the formation of a stable complex. GrpE releases ADP from DnaK; ATP binding to DnaK triggers the release of the substrate protein, thus completing the reaction cycle. Several rounds of ATP-dependent interactions between DnaJ, DnaK and GrpE are required for fully efficient folding. Also involved, together with DnaK and GrpE, in the DNA replication of plasmids through activation of initiation proteins. The protein is Chaperone protein DnaJ of Bacillus cytotoxicus (strain DSM 22905 / CIP 110041 / 391-98 / NVH 391-98).